Reading from the N-terminus, the 254-residue chain is 4-hydroxy-tetrahydrodipicolinate reductase (254 aa).

7–12 (GASGRI) contacts NAD(+). Arg35 lines the NADP(+) pocket. NAD(+) is bound by residues 91–93 (GTT) and 115–118 (AHNM). His147 acts as the Proton donor/acceptor in catalysis. His148 contacts (S)-2,3,4,5-tetrahydrodipicolinate. Residue Lys151 is the Proton donor of the active site. 157-158 (GT) contributes to the (S)-2,3,4,5-tetrahydrodipicolinate binding site.

The protein belongs to the DapB family.

The protein resides in the cytoplasm. The catalysed reaction is (S)-2,3,4,5-tetrahydrodipicolinate + NAD(+) + H2O = (2S,4S)-4-hydroxy-2,3,4,5-tetrahydrodipicolinate + NADH + H(+). It carries out the reaction (S)-2,3,4,5-tetrahydrodipicolinate + NADP(+) + H2O = (2S,4S)-4-hydroxy-2,3,4,5-tetrahydrodipicolinate + NADPH + H(+). It functions in the pathway amino-acid biosynthesis; L-lysine biosynthesis via DAP pathway; (S)-tetrahydrodipicolinate from L-aspartate: step 4/4. Catalyzes the conversion of 4-hydroxy-tetrahydrodipicolinate (HTPA) to tetrahydrodipicolinate. The sequence is that of 4-hydroxy-tetrahydrodipicolinate reductase from Helicobacter pylori (strain G27).